The primary structure comprises 167 residues: uncharacterized protein (167 aa).

The protein resides in the virion. This is an uncharacterized protein from Acanthamoeba polyphaga (Amoeba).